The sequence spans 199 residues: Peroxiredoxin-1 (199 aa).

Ser2 bears the N-acetylserine mark. One can recognise a Thioredoxin domain in the interval 6–165 (AKIGYPAPNF…IIRLVQAFQF (160 aa)). Lys7 bears the N6-acetyllysine; alternate mark. Lys7 participates in a covalent cross-link: Glycyl lysine isopeptide (Lys-Gly) (interchain with G-Cter in SUMO2); alternate. An N6-acetyllysine mark is found at Lys16 and Lys27. Residue Ser32 is modified to Phosphoserine. Position 35 is an N6-acetyllysine; alternate (Lys35). N6-succinyllysine; alternate is present on Lys35. Cys52 (cysteine sulfenic acid (-SOH) intermediate) is an active-site residue. Thr90 carries the post-translational modification Phosphothreonine. Residue Lys120 forms a Glycyl lysine isopeptide (Lys-Gly) (interchain with G-Cter in SUMO2) linkage. At Lys136 the chain carries N6-acetyllysine. A Glycyl lysine isopeptide (Lys-Gly) (interchain with G-Cter in SUMO1) cross-link involves residue Lys185. Lys197 bears the N6-acetyllysine mark.

The protein belongs to the peroxiredoxin family. AhpC/Prx1 subfamily. In terms of assembly, homodimer; disulfide-linked, upon oxidation. 5 homodimers assemble to form a ring-like decamer. Interacts with GDPD5; forms a mixed-disulfide with GDPD5. Interacts with SESN1 and SESN2. Interacts with FAM107A. Phosphorylated on Thr-90 during the M-phase, which leads to a decrease in enzymatic activity. In terms of processing, acetylation increases reducing activity and resistance to superoxidation. Deacetylated by HDAC6 which decreases reducing activity. Found in various tissues; high concentration in liver.

Its subcellular location is the cytoplasm. The enzyme catalyses a hydroperoxide + [thioredoxin]-dithiol = an alcohol + [thioredoxin]-disulfide + H2O. Functionally, thiol-specific peroxidase that catalyzes the reduction of hydrogen peroxide and organic hydroperoxides to water and alcohols, respectively. Plays a role in cell protection against oxidative stress by detoxifying peroxides and as sensor of hydrogen peroxide-mediated signaling events. Might participate in the signaling cascades of growth factors and tumor necrosis factor-alpha by regulating the intracellular concentrations of H(2)O(2). Reduces an intramolecular disulfide bond in GDPD5 that gates the ability to GDPD5 to drive postmitotic motor neuron differentiation. In Mus musculus (Mouse), this protein is Peroxiredoxin-1 (Prdx1).